We begin with the raw amino-acid sequence, 201 residues long: MELVMKDAPGALTVSETTFGRDFNEALVHQVVVAYAAGARQGTRAQKTRAEVTGSGKKPWRQKGTGRARAGSVKSPIWRSGGVTFAAKPQDHSQKVNKKMYRGALKSILSELVRQDRLIIVEKFSVEAPKTKLLAQKLKDMALEDVLIVTGELDENLFLAARNLYKVDVRDVAGIDPVSLIAFDKVVMTADAVKQVEEMLA.

Residues 45-73 form a disordered region; that stretch reads AQKTRAEVTGSGKKPWRQKGTGRARAGSV.

It belongs to the universal ribosomal protein uL4 family. As to quaternary structure, part of the 50S ribosomal subunit.

One of the primary rRNA binding proteins, this protein initially binds near the 5'-end of the 23S rRNA. It is important during the early stages of 50S assembly. It makes multiple contacts with different domains of the 23S rRNA in the assembled 50S subunit and ribosome. Its function is as follows. Forms part of the polypeptide exit tunnel. In Yersinia pseudotuberculosis serotype O:1b (strain IP 31758), this protein is Large ribosomal subunit protein uL4.